A 1112-amino-acid polypeptide reads, in one-letter code: cGMP-inhibited 3',5'-cyclic phosphodiesterase 3B (1112 aa).

Residues 1-10 are compositionally biased toward basic and acidic residues; it reads MRRDERDAKA. The interaction with RAPGEF3 stretch occupies residues 1 to 25; sequence MRRDERDAKAMRSLQPPDGAGSPPE. A disordered region spans residues 1–26; sequence MRRDERDAKAMRSLQPPDGAGSPPES. Phosphoserine is present on serine 13. 6 consecutive transmembrane segments (helical) span residues 88-108, 117-137, 152-172, 192-212, 220-240, and 247-267; these read FVLALLLGAEPESWAAGAAWL, HSLSPLFSIACAFFFLTCFLT, WWLLALPACCYLGDFLVWQWW, AAAGRLLLVLSCVGLLLTLAH, VLVLLLASFVWWVSFTSLGSL, and LLSGLVGGAGCLLALGLDHFF. Position 295 is a phosphoserine; by PKB/AKT1 or PKB/AKT2 (serine 295). Phosphoserine occurs at positions 296 and 442. The disordered stretch occupies residues 418–471; sequence EKGDRKLNKGLNRNSLPTPQLRRSSGTSGLLPVEQSSRWDRNNGKRPHQEFGIS. The segment covering 428–445 has biased composition (polar residues); that stretch reads LNRNSLPTPQLRRSSGTS. Residues 436-460 are interaction with PIK3R6; that stretch reads PQLRRSSGTSGLLPVEQSSRWDRNN. Basic and acidic residues predominate over residues 454–466; that stretch reads SRWDRNNGKRPHQ. The PDEase domain maps to 651–1079; that stretch reads TNIEQEVSLD…KIWKEIVEEE (429 aa). Histidine 737 acts as the Proton donor in catalysis. An AMP-binding site is contributed by histidine 737. The Mg(2+) site is built by histidine 741, histidine 821, aspartate 822, and aspartate 937. AMP is bound by residues aspartate 822, aspartate 937, and glutamine 988. 2 stretches are compositionally biased toward acidic residues: residues 1017-1041 and 1103-1112; these read EEDNDTESGDDEDGEELDTEDEEME and QVIEEADEEE. Disordered stretches follow at residues 1017-1051 and 1092-1112; these read EEDNDTESGDDEDGEELDTEDEEMENNLNPKPPRR and ENSSLPQADEIQVIEEADEEE.

It belongs to the cyclic nucleotide phosphodiesterase family. PDE3 subfamily. Homodimer. Interacts with PIK3CG; regulates PDE3B activity and thereby cAMP levels in cells. Interacts with RAPGEF3 and PIK3R6; form a signaling complex that regulates phosphatidylinositol 3-kinase gamma in angiogenesis. Interacts with ABHD15; this interaction regulates PDE3B's stability and expression and, thereby, impacts the antilipolytic action of insulin. Mg(2+) is required as a cofactor. Mn(2+) serves as cofactor. Post-translationally, phosphorylation at Ser-295 mediates insulin-induced activation of PDE3B. In terms of tissue distribution, abundant in adipose tissues.

The protein localises to the membrane. It carries out the reaction a nucleoside 3',5'-cyclic phosphate + H2O = a nucleoside 5'-phosphate + H(+). The enzyme catalyses 3',5'-cyclic AMP + H2O = AMP + H(+). The catalysed reaction is 3',5'-cyclic GMP + H2O = GMP + H(+). Its activity is regulated as follows. Inhibited by cGMP. Its function is as follows. Cyclic nucleotide phosphodiesterase with a dual-specificity for the second messengers cAMP and cGMP, which are key regulators of many important physiological process. Regulates angiogenesis by inhibiting the cAMP-dependent guanine nucleotide exchange factor RAPGEF3 and downstream phosphatidylinositol 3-kinase gamma-mediated signaling. Controls cardiac contractility by reducing cAMP concentration in cardiocytes. The polypeptide is cGMP-inhibited 3',5'-cyclic phosphodiesterase 3B (Homo sapiens (Human)).